The following is a 247-amino-acid chain: Dihydroorotate dehydrogenase B (NAD(+)), electron transfer subunit (247 aa).

Residues 2–96 (RWKMKARVLS…TGPHGNGFEI (95 aa)) enclose the FAD-binding FR-type domain. Residues 49–52 (RPFS), 64–66 (LYQ), and 71–72 (GT) each bind FAD. Cys-210, Cys-215, Cys-218, and Cys-234 together coordinate [2Fe-2S] cluster.

It belongs to the PyrK family. As to quaternary structure, heterotetramer of 2 PyrK and 2 PyrD type B subunits. [2Fe-2S] cluster serves as cofactor. The cofactor is FAD.

Its pathway is pyrimidine metabolism; UMP biosynthesis via de novo pathway; orotate from (S)-dihydroorotate (NAD(+) route): step 1/1. Its function is as follows. Responsible for channeling the electrons from the oxidation of dihydroorotate from the FMN redox center in the PyrD type B subunit to the ultimate electron acceptor NAD(+). The protein is Dihydroorotate dehydrogenase B (NAD(+)), electron transfer subunit of Caldanaerobacter subterraneus subsp. tengcongensis (strain DSM 15242 / JCM 11007 / NBRC 100824 / MB4) (Thermoanaerobacter tengcongensis).